The primary structure comprises 557 residues: Potassium-transporting ATPase potassium-binding subunit (557 aa).

A run of 12 helical transmembrane segments spans residues 5–25 (GFLLIATFLLVFMVLARPLGS), 63–83 (LSAILGLNILGLAVLFFMLLG), 132–152 (GLTVQNFLSAASGIAVIFALI), 170–190 (LLRITLWVLTPVALLIALFFI), 253–273 (FVQMLAIFLIPTALCFAFGEV), 283–303 (LLWAMSVIFVICVGVVMWAEV), 329–349 (VLVSSLFAVVTTAASCGAVIA), 356–376 (ALGGMVPMWLMQIGEVVFGGV), 379–399 (GLYGMMLFVLLAVFIAGLMIG), 416–436 (LTALAILVTPTLVLMGAALAM), 484–504 (LLALCMFVGRFGVIIPVMAIA), and 526–546 (LFVGLLIGTVLLVGALTFIPA).

This sequence belongs to the KdpA family. The system is composed of three essential subunits: KdpA, KdpB and KdpC.

It is found in the cell inner membrane. Its function is as follows. Part of the high-affinity ATP-driven potassium transport (or Kdp) system, which catalyzes the hydrolysis of ATP coupled with the electrogenic transport of potassium into the cytoplasm. This subunit binds the periplasmic potassium ions and delivers the ions to the membrane domain of KdpB through an intramembrane tunnel. This chain is Potassium-transporting ATPase potassium-binding subunit, found in Escherichia coli (strain UTI89 / UPEC).